Here is a 390-residue protein sequence, read N- to C-terminus: Transforming growth factor beta-1 proprotein (390 aa).

The signal sequence occupies residues 1-29 (MPPSGLRLLPLLLPLLWLLMLTPGRPVAG). The tract at residues 30–74 (LSTCKTIDMELVKRKRIEAIRGQILSKLRLASPPSQGDVPPGPLP) is straightjacket domain. Positions 75–271 (EAILALYNST…ATPLERAQHL (197 aa)) are arm domain. 3 N-linked (GlcNAc...) asparagine glycosylation sites follow: Asn-82, Asn-136, and Asn-176. The tract at residues 226–252 (DSKDNTLQVDINGFSSGRRGDLATIHG) is bowtie tail. A Cell attachment site motif is present at residues 244-246 (RGD). Disulfide bonds link Cys-285/Cys-294, Cys-293/Cys-356, Cys-322/Cys-387, and Cys-326/Cys-389.

It belongs to the TGF-beta family. In terms of assembly, homodimer; disulfide-linked. Interacts with the serine proteases, HTRA1 and HTRA3: the interaction with either inhibits TGFB1-mediated signaling and the HTRA protease activity is required for this inhibition. May interact with THSD4; this interaction may lead to sequestration by FBN1 microfibril assembly and attenuation of TGFB signaling. Interacts with CD109, DPT and ASPN. Interacts with EFEMP2. Interacts with TSKU; the interaction contributes to regulation of the hair cycle. Interacts with TGFBR3. Homodimer; disulfide-linked. Interacts with transforming growth factor beta-1 (TGF-beta-1) chain; interaction is non-covalent and maintains TGF-beta-1 in a latent state; each latency-associated peptide (LAP) monomer interacts with TGF-beta-1 in the other monomer. Interacts with LTBP1; leading to regulation of TGF-beta-1 activation. Interacts with LRRC32/GARP; leading to regulation of TGF-beta-1 activation on the surface of activated regulatory T-cells (Tregs). Interacts with LRRC33/NRROS; leading to regulation of TGF-beta-1 activation in macrophages and microglia. Interacts (via cell attachment site) with integrins ITGAV and ITGB6 (ITGAV:ITGB6), leading to release of the active TGF-beta-1. Interacts with NREP; the interaction results in a decrease in TGFB1 autoinduction. Interacts with HSP90AB1; inhibits latent TGFB1 activation. As to quaternary structure, homodimer; disulfide-linked. Interacts with TGF-beta receptors (TGFBR1 and TGFBR2), leading to signal transduction. Interacts with EFEMP2. In terms of processing, transforming growth factor beta-1 proprotein: The precursor proprotein is cleaved in the Golgi apparatus by FURIN to form Transforming growth factor beta-1 (TGF-beta-1) and Latency-associated peptide (LAP) chains, which remain non-covalently linked, rendering TGF-beta-1 inactive. Post-translationally, N-glycosylated. Deglycosylation leads to activation of Transforming growth factor beta-1 (TGF-beta-1); mechanisms triggering deglycosylation-driven activation of TGF-beta-1 are however unclear.

Its subcellular location is the secreted. The protein resides in the extracellular space. The protein localises to the extracellular matrix. Functionally, transforming growth factor beta-1 proprotein: Precursor of the Latency-associated peptide (LAP) and Transforming growth factor beta-1 (TGF-beta-1) chains, which constitute the regulatory and active subunit of TGF-beta-1, respectively. Required to maintain the Transforming growth factor beta-1 (TGF-beta-1) chain in a latent state during storage in extracellular matrix. Associates non-covalently with TGF-beta-1 and regulates its activation via interaction with 'milieu molecules', such as LTBP1, LRRC32/GARP and LRRC33/NRROS, that control activation of TGF-beta-1. Interaction with LRRC33/NRROS regulates activation of TGF-beta-1 in macrophages and microglia. Interaction with LRRC32/GARP controls activation of TGF-beta-1 on the surface of activated regulatory T-cells (Tregs). Interaction with integrins (ITGAV:ITGB6 or ITGAV:ITGB8) results in distortion of the Latency-associated peptide chain and subsequent release of the active TGF-beta-1. In terms of biological role, multifunctional protein that regulates the growth and differentiation of various cell types and is involved in various processes, such as normal development, immune function, microglia function and responses to neurodegeneration. Activation into mature form follows different steps: following cleavage of the proprotein in the Golgi apparatus, Latency-associated peptide (LAP) and Transforming growth factor beta-1 (TGF-beta-1) chains remain non-covalently linked rendering TGF-beta-1 inactive during storage in extracellular matrix. At the same time, LAP chain interacts with 'milieu molecules', such as LTBP1, LRRC32/GARP and LRRC33/NRROS that control activation of TGF-beta-1 and maintain it in a latent state during storage in extracellular milieus. TGF-beta-1 is released from LAP by integrins (ITGAV:ITGB6 or ITGAV:ITGB8): integrin-binding to LAP stabilizes an alternative conformation of the LAP bowtie tail and results in distortion of the LAP chain and subsequent release of the active TGF-beta-1. Once activated following release of LAP, TGF-beta-1 acts by binding to TGF-beta receptors (TGFBR1 and TGFBR2), which transduce signal. While expressed by many cells types, TGF-beta-1 only has a very localized range of action within cell environment thanks to fine regulation of its activation by Latency-associated peptide chain (LAP) and 'milieu molecules'. Plays an important role in bone remodeling: acts as a potent stimulator of osteoblastic bone formation, causing chemotaxis, proliferation and differentiation in committed osteoblasts. Can promote either T-helper 17 cells (Th17) or regulatory T-cells (Treg) lineage differentiation in a concentration-dependent manner. At high concentrations, leads to FOXP3-mediated suppression of RORC and down-regulation of IL-17 expression, favoring Treg cell development. At low concentrations in concert with IL-6 and IL-21, leads to expression of the IL-17 and IL-23 receptors, favoring differentiation to Th17 cells. Stimulates sustained production of collagen through the activation of CREB3L1 by regulated intramembrane proteolysis (RIP). Mediates SMAD2/3 activation by inducing its phosphorylation and subsequent translocation to the nucleus. Positively regulates odontoblastic differentiation in dental papilla cells, via promotion of IPO7-mediated translocation of phosphorylated SMAD2 to the nucleus and subsequent transcription of target genes. Can induce epithelial-to-mesenchymal transition (EMT) and cell migration in various cell types. The chain is Transforming growth factor beta-1 proprotein (TGFB1) from Bos taurus (Bovine).